Consider the following 145-residue polypeptide: Large ribosomal subunit protein uL16 (145 aa).

It belongs to the universal ribosomal protein uL16 family. As to quaternary structure, part of the 50S ribosomal subunit.

Functionally, binds 23S rRNA and is also seen to make contacts with the A and possibly P site tRNAs. The polypeptide is Large ribosomal subunit protein uL16 (Agathobacter rectalis (strain ATCC 33656 / DSM 3377 / JCM 17463 / KCTC 5835 / VPI 0990) (Eubacterium rectale)).